The primary structure comprises 35 residues: Photosystem II reaction center protein T (35 aa).

A helical transmembrane segment spans residues 3-23 (ALVYTFLLVSTLGIIFFAIFF).

Belongs to the PsbT family. As to quaternary structure, PSII is composed of 1 copy each of membrane proteins PsbA, PsbB, PsbC, PsbD, PsbE, PsbF, PsbH, PsbI, PsbJ, PsbK, PsbL, PsbM, PsbT, PsbY, PsbZ, Psb30/Ycf12, at least 3 peripheral proteins of the oxygen-evolving complex and a large number of cofactors. It forms dimeric complexes.

It localises to the plastid. It is found in the chloroplast thylakoid membrane. Its function is as follows. Found at the monomer-monomer interface of the photosystem II (PS II) dimer, plays a role in assembly and dimerization of PSII. PSII is a light-driven water plastoquinone oxidoreductase, using light energy to abstract electrons from H(2)O, generating a proton gradient subsequently used for ATP formation. The chain is Photosystem II reaction center protein T from Suaeda aralocaspica (Seablite).